The following is a 768-amino-acid chain: DNA ligase (768 aa).

NAD(+) contacts are provided by residues 30-34, 79-80, and glutamate 190; these read DAEYD and SL. Lysine 192 acts as the N6-AMP-lysine intermediate in catalysis. The NAD(+) site is built by arginine 213, glutamate 250, lysine 367, and lysine 391. Cysteine 485, cysteine 488, cysteine 503, and cysteine 509 together coordinate Zn(2+). In terms of domain architecture, BRCT spans 678–767; the sequence is AAEQPLSGLS…IPPEIQARMQ (90 aa).

The protein belongs to the NAD-dependent DNA ligase family. LigA subfamily. It depends on Mg(2+) as a cofactor. Requires Mn(2+) as cofactor.

The catalysed reaction is NAD(+) + (deoxyribonucleotide)n-3'-hydroxyl + 5'-phospho-(deoxyribonucleotide)m = (deoxyribonucleotide)n+m + AMP + beta-nicotinamide D-nucleotide.. Functionally, DNA ligase that catalyzes the formation of phosphodiester linkages between 5'-phosphoryl and 3'-hydroxyl groups in double-stranded DNA using NAD as a coenzyme and as the energy source for the reaction. It is essential for DNA replication and repair of damaged DNA. The chain is DNA ligase from Magnetococcus marinus (strain ATCC BAA-1437 / JCM 17883 / MC-1).